A 628-amino-acid chain; its full sequence is DNA-directed RNA polymerase subunit gamma (628 aa).

Zn(2+) contacts are provided by Cys71, Cys73, Cys86, and Cys89. 3 residues coordinate Mg(2+): Asp467, Asp469, and Asp471.

The protein belongs to the RNA polymerase beta' chain family. RpoC1 subfamily. In terms of assembly, in cyanobacteria the RNAP catalytic core is composed of 2 alpha, 1 beta, 1 beta', 1 gamma and 1 omega subunit. When a sigma factor is associated with the core the holoenzyme is formed, which can initiate transcription. The cofactor is Mg(2+). Zn(2+) serves as cofactor.

The enzyme catalyses RNA(n) + a ribonucleoside 5'-triphosphate = RNA(n+1) + diphosphate. DNA-dependent RNA polymerase catalyzes the transcription of DNA into RNA using the four ribonucleoside triphosphates as substrates. The sequence is that of DNA-directed RNA polymerase subunit gamma from Crocosphaera subtropica (strain ATCC 51142 / BH68) (Cyanothece sp. (strain ATCC 51142)).